The primary structure comprises 398 residues: Acetate kinase (398 aa).

Mg(2+) is bound at residue N8. K15 is a binding site for ATP. R89 serves as a coordination point for substrate. D146 acts as the Proton donor/acceptor in catalysis. ATP is bound by residues 206–210 (HIGNG), 283–285 (DMR), and 331–335 (GMGEN). Residue E383 participates in Mg(2+) binding.

Belongs to the acetokinase family. Homodimer. It depends on Mg(2+) as a cofactor. Mn(2+) is required as a cofactor.

The protein localises to the cytoplasm. It catalyses the reaction acetate + ATP = acetyl phosphate + ADP. The protein operates within metabolic intermediate biosynthesis; acetyl-CoA biosynthesis; acetyl-CoA from acetate: step 1/2. In terms of biological role, catalyzes the formation of acetyl phosphate from acetate and ATP. Can also catalyze the reverse reaction. This is Acetate kinase from Streptococcus pyogenes serotype M5 (strain Manfredo).